The primary structure comprises 183 residues: Crossover junction endodeoxyribonuclease RuvC (183 aa).

Catalysis depends on residues Asp16, Glu75, and Asp147. 3 residues coordinate Mg(2+): Asp16, Glu75, and Asp147.

The protein belongs to the RuvC family. In terms of assembly, homodimer which binds Holliday junction (HJ) DNA. The HJ becomes 2-fold symmetrical on binding to RuvC with unstacked arms; it has a different conformation from HJ DNA in complex with RuvA. In the full resolvosome a probable DNA-RuvA(4)-RuvB(12)-RuvC(2) complex forms which resolves the HJ. Mg(2+) serves as cofactor.

It is found in the cytoplasm. It catalyses the reaction Endonucleolytic cleavage at a junction such as a reciprocal single-stranded crossover between two homologous DNA duplexes (Holliday junction).. In terms of biological role, the RuvA-RuvB-RuvC complex processes Holliday junction (HJ) DNA during genetic recombination and DNA repair. Endonuclease that resolves HJ intermediates. Cleaves cruciform DNA by making single-stranded nicks across the HJ at symmetrical positions within the homologous arms, yielding a 5'-phosphate and a 3'-hydroxyl group; requires a central core of homology in the junction. The consensus cleavage sequence is 5'-(A/T)TT(C/G)-3'. Cleavage occurs on the 3'-side of the TT dinucleotide at the point of strand exchange. HJ branch migration catalyzed by RuvA-RuvB allows RuvC to scan DNA until it finds its consensus sequence, where it cleaves and resolves the cruciform DNA. The protein is Crossover junction endodeoxyribonuclease RuvC of Azoarcus sp. (strain BH72).